Consider the following 146-residue polypeptide: Hemoglobin subunit beta (146 aa).

A Globin domain is found at 2 to 146 (QWTAEEKQLI…VAHALARKYH (145 aa)). 2 residues coordinate heme b: His63 and His92.

The protein belongs to the globin family. Heterotetramer of two alpha chains and two beta chains. Red blood cells.

In terms of biological role, involved in oxygen transport from the lung to the various peripheral tissues. This chain is Hemoglobin subunit beta (HBB), found in Turdus merula (Common blackbird).